The sequence spans 271 residues: Magnesium dechelatase SGR2, chloroplastic (271 aa).

The transit peptide at 1-54 (MCSLATNLLLPSKMKPVFPEKLSTSSLCVTTRRSKMKNRSIVPVARLFGPAIFE) directs the protein to the chloroplast.

The protein belongs to the staygreen family. In terms of assembly, interacts with the light harvesting complex II (LHCII). Interacts with the chlorophyll catabolic enzyme (CCE) RCCR.

The protein resides in the plastid. Its subcellular location is the chloroplast thylakoid membrane. The enzyme catalyses chlorophyll a + 2 H(+) = pheophytin a + Mg(2+). Functionally, magnesium chelatase involved in chlorophyll a degradation in the chlorophyll-protein complexes of photosystem I (PSI) and photosystem II (PSII). Contributes to the degradation of PSI and PSII in the thylakoid membranes. Required to trigger chlorophyll degradation during natural and dark-induced leaf senescence. Mediates chlorophyll degradation during embryo degreening. Recombinant SGR2 possesses high dechelating activity against chlorophyll a, very low activity against chlorophyllide a, and no activity against chlorophyll b. This is Magnesium dechelatase SGR2, chloroplastic from Arabidopsis thaliana (Mouse-ear cress).